Here is a 1755-residue protein sequence, read N- to C-terminus: Transposon Ty1-ER1 Gag-Pol polyprotein (1755 aa).

Polar residues-rich tracts occupy residues 1–23 (MESQQLSQHSPISHGSACASVTS), 48–60 (TKANSQQTTTPAS), and 127–152 (QSQFPQYPSSVGTPLSTPSPESGNTF). 3 disordered regions span residues 1 to 93 (MESQ…MMTQ), 126 to 174 (PQSQ…PPPM), and 352 to 421 (GSRN…SKST). A compositionally biased stretch (low complexity) spans 153–165 (TDSSSADSDMTST). The RNA-binding stretch occupies residues 299 to 401 (NNGIHINNKV…NSKSKTARAH (103 aa)). The segment covering 402 to 418 (NVSTSNNSPSTDNDSIS) has biased composition (low complexity). Serine 416 is subject to Phosphoserine. Aspartate 461 (for protease activity; shared with dimeric partner) is an active-site residue. The segment at 583-640 (NVHTSESTRKYPYPFIHRMLAHANAQTIRYSLKNNTITYFNESDVDWSSAIDYQCPDC) is integrase-type zinc finger-like. In terms of domain architecture, Integrase catalytic spans 660–835 (NSYEPFQYLH…AGLDISTLLP (176 aa)). Residues aspartate 671 and aspartate 736 each contribute to the Mg(2+) site. Disordered regions lie at residues 956-1087 (SKAV…ETEK), 1092-1111 (RSPSIDASPPENNSSHNIVP), and 1130-1171 (DLPL…DSNA). Positions 960–969 (SPTDSTPPST) are enriched in low complexity. Polar residues predominate over residues 1005 to 1015 (STPQISNIEST). A compositionally biased stretch (basic and acidic residues) spans 1038-1053 (ESSHASKSKDFRHSDS). 2 stretches are compositionally biased toward polar residues: residues 1054–1082 (YSENETNHTNVPISSTGGTNNKTVPQISD) and 1101–1111 (PENNSSHNIVP). Positions 1178–1212 (KKRSLEDNETEIKVSRDTWNTKNMRSLEPPRSKKR) match the Bipartite nuclear localization signal motif. In terms of domain architecture, Reverse transcriptase Ty1/copia-type spans 1338–1476 (NNYYITQLDI…DILGLEIKYQ (139 aa)). Residues aspartate 1346, aspartate 1427, aspartate 1428, aspartate 1610, glutamate 1652, and aspartate 1685 each coordinate Mg(2+). The RNase H Ty1/copia-type domain maps to 1610–1752 (DASYGNQPYY…IKTFKLLTNK (143 aa)).

The capsid protein forms a homotrimer, from which the VLPs are assembled. The protease is a homodimer, whose active site consists of two apposed aspartic acid residues. Post-translationally, initially, virus-like particles (VLPs) are composed of the structural unprocessed proteins Gag and Gag-Pol, and also contain the host initiator methionine tRNA (tRNA(i)-Met) which serves as a primer for minus-strand DNA synthesis, and a dimer of genomic Ty RNA. Processing of the polyproteins occurs within the particle and proceeds by an ordered pathway, called maturation. First, the protease (PR) is released by autocatalytic cleavage of the Gag-Pol polyprotein yielding capsid protein p45 and a Pol-p154 precursor protein. This cleavage is a prerequisite for subsequent processing of Pol-p154 at the remaining sites to release the mature structural and catalytic proteins. Maturation takes place prior to the RT reaction and is required to produce transposition-competent VLPs.

It localises to the cytoplasm. The protein localises to the nucleus. It catalyses the reaction DNA(n) + a 2'-deoxyribonucleoside 5'-triphosphate = DNA(n+1) + diphosphate. The enzyme catalyses Endonucleolytic cleavage to 5'-phosphomonoester.. Its function is as follows. Capsid protein (CA) is the structural component of the virus-like particle (VLP), forming the shell that encapsulates the retrotransposons dimeric RNA genome. The particles are assembled from trimer-clustered units and there are holes in the capsid shells that allow for the diffusion of macromolecules. CA also has nucleocapsid-like chaperone activity, promoting primer tRNA(i)-Met annealing to the multipartite primer-binding site (PBS), dimerization of Ty1 RNA and initiation of reverse transcription. The aspartyl protease (PR) mediates the proteolytic cleavages of the Gag and Gag-Pol polyproteins after assembly of the VLP. Functionally, reverse transcriptase/ribonuclease H (RT) is a multifunctional enzyme that catalyzes the conversion of the retro-elements RNA genome into dsDNA within the VLP. The enzyme displays a DNA polymerase activity that can copy either DNA or RNA templates, and a ribonuclease H (RNase H) activity that cleaves the RNA strand of RNA-DNA heteroduplexes during plus-strand synthesis and hydrolyzes RNA primers. The conversion leads to a linear dsDNA copy of the retrotransposon that includes long terminal repeats (LTRs) at both ends. In terms of biological role, integrase (IN) targets the VLP to the nucleus, where a subparticle preintegration complex (PIC) containing at least integrase and the newly synthesized dsDNA copy of the retrotransposon must transit the nuclear membrane. Once in the nucleus, integrase performs the integration of the dsDNA into the host genome. This is Transposon Ty1-ER1 Gag-Pol polyprotein (TY1B-ER1) from Saccharomyces cerevisiae (strain ATCC 204508 / S288c) (Baker's yeast).